Reading from the N-terminus, the 260-residue chain is NH(3)-dependent NAD(+) synthetase (260 aa).

31 to 38 lines the ATP pocket; sequence GLSGGLDS. D37 is a Mg(2+) binding site. Residue R112 participates in deamido-NAD(+) binding. T132 serves as a coordination point for ATP. Mg(2+) is bound at residue E137. The ATP site is built by K161 and S183.

This sequence belongs to the NAD synthetase family. Homodimer.

It carries out the reaction deamido-NAD(+) + NH4(+) + ATP = AMP + diphosphate + NAD(+) + H(+). It participates in cofactor biosynthesis; NAD(+) biosynthesis; NAD(+) from deamido-NAD(+) (ammonia route): step 1/1. In terms of biological role, catalyzes the ATP-dependent amidation of deamido-NAD to form NAD. Uses ammonia as a nitrogen source. The chain is NH(3)-dependent NAD(+) synthetase from Helicobacter pylori (strain J99 / ATCC 700824) (Campylobacter pylori J99).